A 350-amino-acid polypeptide reads, in one-letter code: tRNA N6-adenosine threonylcarbamoyltransferase (350 aa).

Fe cation is bound by residues H109 and H113. Residues 136-140 (TVSGG), D169, G182, D186, and N284 contribute to the substrate site. D312 serves as a coordination point for Fe cation.

It belongs to the KAE1 / TsaD family. Fe(2+) serves as cofactor.

It localises to the cytoplasm. It carries out the reaction L-threonylcarbamoyladenylate + adenosine(37) in tRNA = N(6)-L-threonylcarbamoyladenosine(37) in tRNA + AMP + H(+). Its function is as follows. Required for the formation of a threonylcarbamoyl group on adenosine at position 37 (t(6)A37) in tRNAs that read codons beginning with adenine. Is involved in the transfer of the threonylcarbamoyl moiety of threonylcarbamoyl-AMP (TC-AMP) to the N6 group of A37, together with TsaE and TsaB. TsaD likely plays a direct catalytic role in this reaction. In Pelodictyon phaeoclathratiforme (strain DSM 5477 / BU-1), this protein is tRNA N6-adenosine threonylcarbamoyltransferase.